The primary structure comprises 107 residues: Nucleoid-associated protein Mlg_1509 (107 aa).

It belongs to the YbaB/EbfC family. In terms of assembly, homodimer.

The protein resides in the cytoplasm. The protein localises to the nucleoid. Binds to DNA and alters its conformation. May be involved in regulation of gene expression, nucleoid organization and DNA protection. The sequence is that of Nucleoid-associated protein Mlg_1509 from Alkalilimnicola ehrlichii (strain ATCC BAA-1101 / DSM 17681 / MLHE-1).